The following is a 496-amino-acid chain: Palmitoleoyl-protein carboxylesterase NOTUM (496 aa).

The first 19 residues, 1–19 (MGRGVRVLLLLSLLHCAGG), serve as a signal peptide directing secretion. Residues 21-46 (EGRKTWRRRGQQPPPPPRTEAAPAAG) are disordered. A Phosphoserine; by FAM20C modification is found at serine 81. N-linked (GlcNAc...) asparagine glycosylation is present at asparagine 96. Catalysis depends on charge relay system residues serine 232, aspartate 340, and histidine 389.

Belongs to the pectinacetylesterase family. Notum subfamily. As to expression, rarely expressed in adult normal tissues.

It is found in the secreted. It catalyses the reaction [Wnt protein]-O-(9Z)-hexadecenoyl-L-serine + H2O = [Wnt protein]-L-serine + (9Z)-hexadecenoate + H(+). In terms of biological role, carboxylesterase that acts as a key negative regulator of the Wnt signaling pathway by specifically mediating depalmitoleoylation of WNT proteins. Serine palmitoleoylation of WNT proteins is required for efficient binding to frizzled receptors. This Homo sapiens (Human) protein is Palmitoleoyl-protein carboxylesterase NOTUM.